A 458-amino-acid chain; its full sequence is ATP synthase subunit beta (458 aa).

148-155 (GGAGVGKT) contacts ATP.

This sequence belongs to the ATPase alpha/beta chains family. F-type ATPases have 2 components, CF(1) - the catalytic core - and CF(0) - the membrane proton channel. CF(1) has five subunits: alpha(3), beta(3), gamma(1), delta(1), epsilon(1). CF(0) has three main subunits: a(1), b(2) and c(9-12). The alpha and beta chains form an alternating ring which encloses part of the gamma chain. CF(1) is attached to CF(0) by a central stalk formed by the gamma and epsilon chains, while a peripheral stalk is formed by the delta and b chains.

Its subcellular location is the cell inner membrane. The catalysed reaction is ATP + H2O + 4 H(+)(in) = ADP + phosphate + 5 H(+)(out). Functionally, produces ATP from ADP in the presence of a proton gradient across the membrane. The catalytic sites are hosted primarily by the beta subunits. The protein is ATP synthase subunit beta of Shewanella loihica (strain ATCC BAA-1088 / PV-4).